The chain runs to 624 residues: Chaperone protein HtpG (624 aa).

The tract at residues 1 to 336 (MKGQETRGFQ…SNDLPLNVSR (336 aa)) is a; substrate-binding. The b stretch occupies residues 337–552 (EILQDSSVTR…ADEMSTQMAK (216 aa)). Residues 553–624 (LFAAAGQAAP…IRRMNQLLAS (72 aa)) are c.

It belongs to the heat shock protein 90 family. In terms of assembly, homodimer.

It is found in the cytoplasm. Its function is as follows. Molecular chaperone. Has ATPase activity. The polypeptide is Chaperone protein HtpG (Klebsiella pneumoniae subsp. pneumoniae (strain ATCC 700721 / MGH 78578)).